Reading from the N-terminus, the 1149-residue chain is Protein deacetylase HDAC6 (1149 aa).

The segment at 1–61 (MTSTGQDSST…KGKMKKLSQP (61 aa)) is disordered. A compositionally biased stretch (polar residues) spans 18–29 (NPQSPLQESSAT). Ser21 is modified (phosphoserine). An Omega-N-methylarginine modification is found at Arg32. A Phosphoserine modification is found at Ser43. The Nuclear export signal motif lies at 66-75 (LVVGLQGLDL). Histone deacetylase regions lie at residues 87-403 (LVFD…TLLG) and 481-799 (GLVY…SLLG). Residue His215 is the 1 of the active site. The active-site 2 is the His610. Positions 954–975 (ALGETEPTPPASHTNKQTTGAS) are disordered. Phosphothreonine is present on residues Thr958, Thr961, Thr967, and Thr971. A compositionally biased stretch (polar residues) spans 964–975 (ASHTNKQTTGAS). Ser975 carries the post-translational modification Phosphoserine. The segment at 1045 to 1143 (SWCPHLMAVC…NAAHQNKFGE (99 aa)) adopts a UBP-type zinc-finger fold. 7 residues coordinate Zn(2+): Cys1047, His1049, Cys1067, Cys1070, Cys1079, Cys1082, and Cys1087. The tract at residues 1088–1090 (SRY) is ubiquitin binding. Residues His1094, His1098, His1104, Cys1117, and Cys1120 each coordinate Zn(2+). A ubiquitin binding region spans residues 1116–1123 (WCYVCQAY). A Phosphoserine modification is found at Ser1148.

It belongs to the histone deacetylase family. HD type 2 subfamily. In terms of assembly, forms a trimeric complex in the nucleus consisting of BANP, HDAC6 and KHDRBS1/SAM68; HDAC6 keeps KHDRBS1 in a deacetylated state which inhibits the inclusion of CD44 alternate exons. The complex is disrupted by MAPK1/MAPK3-mediated phosphorylation of BANP which results in BANP export to the cytoplasm. This facilitates acetylation of KHDRBS1 and CD44 variant exon inclusion. Interacts with SIRT2 (via both phosphorylated, unphosphorylated, active or inactive forms); the interaction is necessary for the complex to interact with alpha-tubulin. Under proteasome impairment conditions, interacts with UBD via its histone deacetylase 1 and UBP-type zinc-finger regions. Interacts with BBIP1, CBFA2T3, CYLD, DDIT3/CHOP, ZMYND15, F-actin and HDAC11. Interacts with RIPOR2; this interaction occurs during early myogenic differentiation and prevents HDAC6 to deacetylate tubulin. Interacts with AURKA; AURKA-mediated phosphorylation of HDAC6 promotes deacetylation of alpha-tubulin. Interacts with DYSF; this interaction occurs during early myogenic differentiation. Interacts with TPPP; inhibiting the tubulin deacetylase activity of HDAC6. Interacts with DYNLL1. Interacts with ATP13A2; the interaction results in recruitment of HDAC6 to lysosomes to promote CTTN deacetylation. Interacts with CCDC141 (via the N-terminal region); inhibiting the deacetylase activity of HDAC6. Interacts with IPO7; the interaction facilitates HDAC6 nuclear translocation in dental papilla cells. Zn(2+) is required as a cofactor. Phosphorylated by AURKA; phosphorylation increases HDAC6-mediated deacetylation of alpha-tubulin and subsequent disassembly of cilia. In terms of processing, ubiquitinated. Its polyubiquitination however does not lead to its degradation. Post-translationally, sumoylated in vitro. As to expression, expressed in neurons of the cortex. Expressed in Purkinje cells. Detected in keratinocytes (at protein level).

The protein localises to the cytoplasm. Its subcellular location is the cytoskeleton. It is found in the nucleus. The protein resides in the perikaryon. It localises to the cell projection. The protein localises to the dendrite. Its subcellular location is the axon. It is found in the cilium. The protein resides in the microtubule organizing center. It localises to the centrosome. The protein localises to the cilium basal body. The catalysed reaction is N(6)-acetyl-L-lysyl-[protein] + H2O = L-lysyl-[protein] + acetate. It carries out the reaction N(6)-acetyl-L-lysyl-[alpha-tubulin] + H2O = L-lysyl-[alpha-tubulin] + acetate. It participates in protein modification; protein ubiquitination. Its function is as follows. Deacetylates a wide range of non-histone substrates. Plays a central role in microtubule-dependent cell motility by mediating deacetylation of tubulin. Required for cilia disassembly via deacetylation of alpha-tubulin. Alpha-tubulin deacetylation results in destabilization of dynamic microtubules. Promotes deacetylation of CTTN, leading to actin polymerization, promotion of autophagosome-lysosome fusion and completion of autophagy. Deacetylates SQSTM1. Deacetylates peroxiredoxins PRDX1 and PRDX2, decreasing their reducing activity. Deacetylates antiviral protein RIGI in the presence of viral mRNAs which is required for viral RNA detection by RIGI. Sequentially deacetylates and polyubiquitinates DNA mismatch repair protein MSH2 which leads to MSH2 degradation, reducing cellular sensitivity to DNA-damaging agents and decreasing cellular DNA mismatch repair activities. Deacetylates DNA mismatch repair protein MLH1 which prevents recruitment of the MutL alpha complex (formed by the MLH1-PMS2 heterodimer) to the MutS alpha complex (formed by the MSH2-MSH6 heterodimer), leading to tolerance of DNA damage. Deacetylates RHOT1/MIRO1 which blocks mitochondrial transport and mediates axon growth inhibition. Deacetylates transcription factor SP1 which leads to increased expression of ENG, positively regulating angiogenesis. Deacetylates KHDRBS1/SAM68 which regulates alternative splicing by inhibiting the inclusion of CD44 alternate exons. Promotes odontoblast differentiation following IPO7-mediated nuclear import and subsequent repression of RUNX2 expression. In addition to its protein deacetylase activity, plays a key role in the degradation of misfolded proteins: when misfolded proteins are too abundant to be degraded by the chaperone refolding system and the ubiquitin-proteasome, mediates the transport of misfolded proteins to a cytoplasmic juxtanuclear structure called aggresome. Probably acts as an adapter that recognizes polyubiquitinated misfolded proteins and target them to the aggresome, facilitating their clearance by autophagy. This Mus musculus (Mouse) protein is Protein deacetylase HDAC6.